We begin with the raw amino-acid sequence, 375 residues long: 1-deoxy-D-xylulose 5-phosphate reductoisomerase (375 aa).

NADPH is bound by residues T10, G11, S12, V13, K37, and N114. K115 is a 1-deoxy-D-xylulose 5-phosphate binding site. NADPH is bound at residue E116. Residue D136 coordinates Mn(2+). Residues S137, E138, S162, and H185 each coordinate 1-deoxy-D-xylulose 5-phosphate. Position 138 (E138) interacts with Mn(2+). G191 is a binding site for NADPH. Positions 198, 203, 204, and 207 each coordinate 1-deoxy-D-xylulose 5-phosphate. Residue E207 participates in Mn(2+) binding.

The protein belongs to the DXR family. It depends on Mg(2+) as a cofactor. Mn(2+) is required as a cofactor.

It catalyses the reaction 2-C-methyl-D-erythritol 4-phosphate + NADP(+) = 1-deoxy-D-xylulose 5-phosphate + NADPH + H(+). Its pathway is isoprenoid biosynthesis; isopentenyl diphosphate biosynthesis via DXP pathway; isopentenyl diphosphate from 1-deoxy-D-xylulose 5-phosphate: step 1/6. Functionally, catalyzes the NADPH-dependent rearrangement and reduction of 1-deoxy-D-xylulose-5-phosphate (DXP) to 2-C-methyl-D-erythritol 4-phosphate (MEP). In Sulfurihydrogenibium sp. (strain YO3AOP1), this protein is 1-deoxy-D-xylulose 5-phosphate reductoisomerase.